Here is a 395-residue protein sequence, read N- to C-terminus: Elongation factor Tu (395 aa).

One can recognise a tr-type G domain in the interval 10–204 (KEHANIGTIG…AVDDFIPTPE (195 aa)). Positions 19-26 (GHVDHGKT) are G1. GTP is bound at residue 19-26 (GHVDHGKT). A Mg(2+)-binding site is contributed by T26. Residues 60 to 64 (GITIN) form a G2 region. Residues 81–84 (DCPG) are G3. GTP is bound by residues 81–85 (DCPGH) and 136–139 (NKVD). The G4 stretch occupies residues 136–139 (NKVD). The segment at 174–176 (SAL) is G5.

It belongs to the TRAFAC class translation factor GTPase superfamily. Classic translation factor GTPase family. EF-Tu/EF-1A subfamily. Monomer.

The protein localises to the cytoplasm. The catalysed reaction is GTP + H2O = GDP + phosphate + H(+). Its function is as follows. GTP hydrolase that promotes the GTP-dependent binding of aminoacyl-tRNA to the A-site of ribosomes during protein biosynthesis. The protein is Elongation factor Tu of Staphylococcus saprophyticus subsp. saprophyticus (strain ATCC 15305 / DSM 20229 / NCIMB 8711 / NCTC 7292 / S-41).